The sequence spans 1431 residues: Zinc finger protein 687b (1431 aa).

2 disordered regions span residues 24–481 and 504–538; these read KEAI…RPLK and KGGA…TTAG. A compositionally biased stretch (low complexity) spans 61–73; it reads SPSPSTDSQSDPS. The span at 103-122 shows a compositional bias: polar residues; sequence GFVSSGGSVHMSQSRGQPNG. Composition is skewed to low complexity over residues 174-188, 196-209, and 217-248; these read MQLL…EMNL, APAN…AASP, and LLST…ASSP. Polar residues predominate over residues 249–267; sequence LATSLTEPFNGTPRLSSSA. A compositionally biased stretch (low complexity) spans 311-324; the sequence is SQSPSIPPSTSISP. The span at 342–359 shows a compositional bias: polar residues; sequence RAQQNWLSTAAQTGNGKS. Over residues 361-377 the composition is skewed to basic and acidic residues; that stretch reads PQEERNPEHVIEERDSP. Residues 385–410 are compositionally biased toward low complexity; sequence PKSSMPTSAVTKRSCSPAAASSPSAA. Over residues 438–449 the composition is skewed to basic and acidic residues; sequence DGGKGDTDKIEV. The span at 519–528 shows a compositional bias: gly residues; the sequence is QTGGRAGPVK. Residues 674–692 form a C2H2-type 1; degenerate zinc finger; it reads YRCLECGDSFALERSLARH. The segment at 754–816 is disordered; the sequence is TTPIGMLSPS…GPQSPQALMP (63 aa). Residues 760 to 775 are compositionally biased toward low complexity; it reads LSPSLSSPPLTSSTTP. The span at 781–802 shows a compositional bias: polar residues; it reads APSTSSPLKDSPSPGTASTQPS. The C2H2-type 2; degenerate zinc-finger motif lies at 830–853; sequence FKCPECQAQFLSKAELVTHFQQIR. 4 consecutive C2H2-type zinc fingers follow at residues 919-942, 947-970, 982-1004, and 1013-1036; these read YRCS…QTAH, HKCP…TSQH, YKCV…FDTH, and FKCP…KTAH. Residues 1041 to 1120 form a disordered region; the sequence is VKAETPPTTS…QVSSPESGNM (80 aa). Residues 1043 to 1057 are compositionally biased toward low complexity; sequence AETPPTTSSPVSAPA. Residues 1058–1075 show a composition bias toward polar residues; that stretch reads GNSTSKPKPATENNSDEL. The span at 1080-1111 shows a compositional bias: acidic residues; the sequence is GEEEEEGEDEEGEQEGEEREDEEEEENEEEEQ. The C2H2-type 7 zinc-finger motif lies at 1122 to 1145; the sequence is WRCKECKKRFPEREDYIDHMKNEH. The C2H2-type 8; degenerate zinc finger occupies 1205–1227; that stretch reads WHCSEGKRTFSSRLILEKHIRVR. Residues 1225 to 1310 form a disordered region; that stretch reads RVRHGIRSRQ…EEEDGTFRCT (86 aa). 2 C2H2-type zinc fingers span residues 1307 to 1329 and 1337 to 1360; these read FRCT…IPVH and QQCL…FITH. A disordered region spans residues 1362 to 1392; sequence LRQGQHDRNASPGASPQYGSPSSPKAGEDGD. A compositionally biased stretch (polar residues) spans 1373 to 1384; the sequence is PGASPQYGSPSS. Residues 1395–1425 form a C2H2-type 11 zinc finger; the sequence is VSCRVCGRRFDKASDLNTHFRTHGMAFITAH.

Belongs to the krueppel C2H2-type zinc-finger protein family. As to expression, widely expressed with highest levels in eye, spleen and ovary.

It localises to the nucleus. Functionally, may be involved in transcriptional regulation. This is Zinc finger protein 687b (znf687b) from Danio rerio (Zebrafish).